Consider the following 151-residue polypeptide: Ribosomal RNA large subunit methyltransferase H (151 aa).

S-adenosyl-L-methionine is bound by residues G100 and 119–124; that span reads LSKMTF.

It belongs to the RNA methyltransferase RlmH family. In terms of assembly, homodimer.

The protein resides in the cytoplasm. It carries out the reaction pseudouridine(1915) in 23S rRNA + S-adenosyl-L-methionine = N(3)-methylpseudouridine(1915) in 23S rRNA + S-adenosyl-L-homocysteine + H(+). In terms of biological role, specifically methylates the pseudouridine at position 1915 (m3Psi1915) in 23S rRNA. The chain is Ribosomal RNA large subunit methyltransferase H from Thermotoga sp. (strain RQ2).